The primary structure comprises 1110 residues: ATP-dependent DNA helicase MPH1 (1110 aa).

Residues 24-34 (LNEVSDSQTGR) show a composition bias toward polar residues. 3 disordered regions span residues 24–165 (LNEV…TNGK), 178–212 (FEEE…PVTN), and 236–305 (TETA…PTHH). Composition is skewed to basic and acidic residues over residues 42-57 (NSHE…REIE) and 178-188 (FEEEQSARGDA). Over residues 189–199 (EMLDDSIEEPG) the composition is skewed to acidic residues. 2 stretches are compositionally biased toward polar residues: residues 246-273 (ISSQ…QTTL) and 287-300 (QPAT…SRNE). The Helicase ATP-binding domain maps to 331–499 (IAHRALFHNL…EVIDGLSISR (169 aa)). Position 344–351 (344–351 (LPTGLGKT)) interacts with ATP. Positions 447-450 (DEAH) match the DEAH box motif. Residues 675-846 (ILNHFLDAGG…RFTFHTDKSS (172 aa)) form the Helicase C-terminal domain. Disordered regions lie at residues 867–937 (ENSQ…PDLG), 1013–1055 (VGDP…RCGT), and 1069–1110 (NLAW…DVFE). Residues 879–890 (RSRAPKRPPKKF) show a composition bias toward basic residues. Composition is skewed to basic and acidic residues over residues 891-900 (HMPDGVEKGF), 1041-1055 (QSRE…RCGT), and 1077-1093 (EAPR…DQKP).

Belongs to the DEAD box helicase family. DEAH subfamily. FANCM sub-subfamily. As to quaternary structure, interacts with the MHF histone-fold complex to form the FANCM-MHF complex.

It is found in the nucleus. The catalysed reaction is ATP + H2O = ADP + phosphate + H(+). ATP-dependent DNA helicase involved in DNA damage repair by homologous recombination and in genome maintenance. Capable of unwinding D-loops. Plays a role in limiting crossover recombinants during mitotic DNA double-strand break (DSB) repair. Component of a FANCM-MHF complex which promotes gene conversion at blocked replication forks, probably by reversal of the stalled fork. The protein is ATP-dependent DNA helicase MPH1 of Coccidioides immitis (strain RS) (Valley fever fungus).